Consider the following 242-residue polypeptide: Purine nucleoside phosphorylase PA4543 (242 aa).

Zn(2+) contacts are provided by His-69, Cys-103, and His-120.

It belongs to the purine nucleoside phosphorylase YfiH/LACC1 family. In terms of assembly, homodimer. Requires Cu(2+) as cofactor. Zn(2+) is required as a cofactor.

It carries out the reaction adenosine + phosphate = alpha-D-ribose 1-phosphate + adenine. The enzyme catalyses S-methyl-5'-thioadenosine + phosphate = 5-(methylsulfanyl)-alpha-D-ribose 1-phosphate + adenine. The catalysed reaction is inosine + phosphate = alpha-D-ribose 1-phosphate + hypoxanthine. It catalyses the reaction adenosine + H2O + H(+) = inosine + NH4(+). Its function is as follows. Purine nucleoside enzyme that catalyzes the phosphorolysis of adenosine and inosine nucleosides, yielding D-ribose 1-phosphate and the respective free bases, adenine and hypoxanthine. Also catalyzes the phosphorolysis of S-methyl-5'-thioadenosine into adenine and S-methyl-5-thio-alpha-D-ribose 1-phosphate. Also has adenosine deaminase activity. This is Purine nucleoside phosphorylase PA4543 from Pseudomonas aeruginosa (strain ATCC 15692 / DSM 22644 / CIP 104116 / JCM 14847 / LMG 12228 / 1C / PRS 101 / PAO1).